The sequence spans 164 residues: CB1 cannabinoid receptor-interacting protein 1 (164 aa).

The protein belongs to the CNRIP family. As to quaternary structure, interacts with the cannabinoid receptor CNR1 (via C-terminus). Does not interact with cannabinoid receptor CNR2.

Suppresses cannabinoid receptor CNR1-mediated tonic inhibition of voltage-gated calcium channels. The sequence is that of CB1 cannabinoid receptor-interacting protein 1 (CNRIP1) from Bos taurus (Bovine).